We begin with the raw amino-acid sequence, 282 residues long: Pantothenate synthetase (282 aa).

30-37 contacts ATP; that stretch reads MGNLHQGH. The active-site Proton donor is the His37. Gln61 serves as a coordination point for (R)-pantoate. Gln61 lines the beta-alanine pocket. Position 149–152 (149–152) interacts with ATP; the sequence is GKKD. Gln155 is a binding site for (R)-pantoate. Residues Ile178 and 186 to 189 contribute to the ATP site; that span reads MSSR.

This sequence belongs to the pantothenate synthetase family. In terms of assembly, homodimer.

The protein resides in the cytoplasm. The catalysed reaction is (R)-pantoate + beta-alanine + ATP = (R)-pantothenate + AMP + diphosphate + H(+). It participates in cofactor biosynthesis; (R)-pantothenate biosynthesis; (R)-pantothenate from (R)-pantoate and beta-alanine: step 1/1. Functionally, catalyzes the condensation of pantoate with beta-alanine in an ATP-dependent reaction via a pantoyl-adenylate intermediate. The polypeptide is Pantothenate synthetase (Shewanella loihica (strain ATCC BAA-1088 / PV-4)).